Reading from the N-terminus, the 179-residue chain is Large ribosomal subunit protein uL5 (179 aa).

Belongs to the universal ribosomal protein uL5 family. In terms of assembly, part of the 50S ribosomal subunit; part of the 5S rRNA/L5/L18/L25 subcomplex. Contacts the 5S rRNA and the P site tRNA. Forms a bridge to the 30S subunit in the 70S ribosome.

Its function is as follows. This is one of the proteins that bind and probably mediate the attachment of the 5S RNA into the large ribosomal subunit, where it forms part of the central protuberance. In the 70S ribosome it contacts protein S13 of the 30S subunit (bridge B1b), connecting the 2 subunits; this bridge is implicated in subunit movement. Contacts the P site tRNA; the 5S rRNA and some of its associated proteins might help stabilize positioning of ribosome-bound tRNAs. The chain is Large ribosomal subunit protein uL5 from Neisseria gonorrhoeae (strain ATCC 700825 / FA 1090).